The following is a 555-amino-acid chain: Potassium-transporting ATPase potassium-binding subunit (555 aa).

10 helical membrane passes run 2–22, 60–80, 130–150, 173–193, 246–266, 278–298, 374–394, 412–432, 483–503, and 525–545; these read IWVA…PTGI, QYAL…YFIF, IGIT…VMAF, VFLP…VPQT, MSNI…PFTY, ILFV…TTSE, AGFV…GLMV, LIAV…ALAL, LVMF…AASL, and GIFI…MLVL.

Belongs to the KdpA family. The system is composed of three essential subunits: KdpA, KdpB and KdpC.

Its subcellular location is the cell membrane. Part of the high-affinity ATP-driven potassium transport (or Kdp) system, which catalyzes the hydrolysis of ATP coupled with the electrogenic transport of potassium into the cytoplasm. This subunit binds the extracellular potassium ions and delivers the ions to the membrane domain of KdpB through an intramembrane tunnel. This Bacillus cereus (strain Q1) protein is Potassium-transporting ATPase potassium-binding subunit.